The chain runs to 606 residues: Aspartate--tRNA(Asp/Asn) ligase (606 aa).

Glu175 serves as a coordination point for L-aspartate. Positions 199–202 (QLFK) are aspartate. L-aspartate is bound at residue Arg221. Residues 221-223 (RDE) and Gln230 contribute to the ATP site. His453 is an L-aspartate binding site. Glu487 is a binding site for ATP. Arg494 serves as a coordination point for L-aspartate. 539 to 542 (GWDR) provides a ligand contact to ATP. The segment at 564 to 606 (GGVDPLTDAPGTIPAEQRKETGVDFKPEKAAKAAQGEKAGKES) is disordered. Positions 579-594 (EQRKETGVDFKPEKAA) are enriched in basic and acidic residues.

Belongs to the class-II aminoacyl-tRNA synthetase family. Type 1 subfamily. Homodimer.

It is found in the cytoplasm. The enzyme catalyses tRNA(Asx) + L-aspartate + ATP = L-aspartyl-tRNA(Asx) + AMP + diphosphate. Its function is as follows. Aspartyl-tRNA synthetase with relaxed tRNA specificity since it is able to aspartylate not only its cognate tRNA(Asp) but also tRNA(Asn). Reaction proceeds in two steps: L-aspartate is first activated by ATP to form Asp-AMP and then transferred to the acceptor end of tRNA(Asp/Asn). The chain is Aspartate--tRNA(Asp/Asn) ligase from Corynebacterium aurimucosum (strain ATCC 700975 / DSM 44827 / CIP 107346 / CN-1) (Corynebacterium nigricans).